The following is a 486-amino-acid chain: Aspartyl/glutamyl-tRNA(Asn/Gln) amidotransferase subunit B (486 aa).

This sequence belongs to the GatB/GatE family. GatB subfamily. Heterotrimer of A, B and C subunits.

It catalyses the reaction L-glutamyl-tRNA(Gln) + L-glutamine + ATP + H2O = L-glutaminyl-tRNA(Gln) + L-glutamate + ADP + phosphate + H(+). The enzyme catalyses L-aspartyl-tRNA(Asn) + L-glutamine + ATP + H2O = L-asparaginyl-tRNA(Asn) + L-glutamate + ADP + phosphate + 2 H(+). Functionally, allows the formation of correctly charged Asn-tRNA(Asn) or Gln-tRNA(Gln) through the transamidation of misacylated Asp-tRNA(Asn) or Glu-tRNA(Gln) in organisms which lack either or both of asparaginyl-tRNA or glutaminyl-tRNA synthetases. The reaction takes place in the presence of glutamine and ATP through an activated phospho-Asp-tRNA(Asn) or phospho-Glu-tRNA(Gln). The protein is Aspartyl/glutamyl-tRNA(Asn/Gln) amidotransferase subunit B of Azoarcus sp. (strain BH72).